Consider the following 163-residue polypeptide: 3-isopropylmalate dehydratase small subunit (163 aa).

It belongs to the LeuD family. LeuD type 2 subfamily. As to quaternary structure, heterodimer of LeuC and LeuD.

The catalysed reaction is (2R,3S)-3-isopropylmalate = (2S)-2-isopropylmalate. The protein operates within amino-acid biosynthesis; L-leucine biosynthesis; L-leucine from 3-methyl-2-oxobutanoate: step 2/4. In terms of biological role, catalyzes the isomerization between 2-isopropylmalate and 3-isopropylmalate, via the formation of 2-isopropylmaleate. This chain is 3-isopropylmalate dehydratase small subunit, found in Ruminiclostridium cellulolyticum (strain ATCC 35319 / DSM 5812 / JCM 6584 / H10) (Clostridium cellulolyticum).